Consider the following 116-residue polypeptide: Ig heavy chain V-A1 region BS-5 (116 aa).

A Pyrrolidone carboxylic acid modification is found at Gln-1. Positions 1–107 constitute an Ig-like domain; the sequence is QSVEESGGRL…LVHLAFVDVW (107 aa).

The polypeptide is Ig heavy chain V-A1 region BS-5 (Oryctolagus cuniculus (Rabbit)).